Here is a 347-residue protein sequence, read N- to C-terminus: Dihydroorotate dehydrogenase (quinone) (347 aa).

FMN is bound by residues 61–65 and threonine 85; that span reads AGLDK. Lysine 65 provides a ligand contact to substrate. 110–114 lines the substrate pocket; that stretch reads NRMGF. The FMN site is built by asparagine 138 and asparagine 171. Asparagine 171 is a binding site for substrate. The active-site Nucleophile is the serine 174. Residue asparagine 176 coordinates substrate. Residues lysine 216 and threonine 244 each contribute to the FMN site. Residue 245–246 participates in substrate binding; it reads NT. FMN-binding positions include glycine 267, glycine 296, and 317-318; that span reads YT.

Belongs to the dihydroorotate dehydrogenase family. Type 2 subfamily. In terms of assembly, monomer. FMN is required as a cofactor.

It is found in the cell membrane. It carries out the reaction (S)-dihydroorotate + a quinone = orotate + a quinol. It participates in pyrimidine metabolism; UMP biosynthesis via de novo pathway; orotate from (S)-dihydroorotate (quinone route): step 1/1. Its function is as follows. Catalyzes the conversion of dihydroorotate to orotate with quinone as electron acceptor. This Azotobacter vinelandii (strain DJ / ATCC BAA-1303) protein is Dihydroorotate dehydrogenase (quinone).